The chain runs to 405 residues: Tryptophan synthase beta chain (405 aa).

K95 is subject to N6-(pyridoxal phosphate)lysine.

Belongs to the TrpB family. Tetramer of two alpha and two beta chains. The cofactor is pyridoxal 5'-phosphate.

It carries out the reaction (1S,2R)-1-C-(indol-3-yl)glycerol 3-phosphate + L-serine = D-glyceraldehyde 3-phosphate + L-tryptophan + H2O. The protein operates within amino-acid biosynthesis; L-tryptophan biosynthesis; L-tryptophan from chorismate: step 5/5. Its function is as follows. The beta subunit is responsible for the synthesis of L-tryptophan from indole and L-serine. The sequence is that of Tryptophan synthase beta chain from Pseudomonas entomophila (strain L48).